We begin with the raw amino-acid sequence, 522 residues long: ATP synthase subunit alpha (522 aa).

Residue 176-183 (GDRQTGKT) coordinates ATP.

Belongs to the ATPase alpha/beta chains family. In terms of assembly, F-type ATPases have 2 components, CF(1) - the catalytic core - and CF(0) - the membrane proton channel. CF(1) has five subunits: alpha(3), beta(3), gamma(1), delta(1), epsilon(1). CF(0) has four main subunits: a(1), b(1), b'(1) and c(9-12).

The protein resides in the cell membrane. It carries out the reaction ATP + H2O + 4 H(+)(in) = ADP + phosphate + 5 H(+)(out). Produces ATP from ADP in the presence of a proton gradient across the membrane. The alpha chain is a regulatory subunit. The chain is ATP synthase subunit alpha from Chloroflexus aurantiacus (strain ATCC 29366 / DSM 635 / J-10-fl).